We begin with the raw amino-acid sequence, 265 residues long: uncharacterized protein (265 aa).

S223 bears the Phosphoserine mark.

This is an uncharacterized protein from Saccharomyces cerevisiae (strain ATCC 204508 / S288c) (Baker's yeast).